Here is a 404-residue protein sequence, read N- to C-terminus: Probable tRNA sulfurtransferase (404 aa).

The THUMP domain maps to 60-165 (TAVAESLKQV…EEAAYLSYET (106 aa)). ATP-binding positions include 183 to 184 (ML), 208 to 209 (HF), Arg265, Gly287, and Gln296.

The protein belongs to the ThiI family.

The protein resides in the cytoplasm. The catalysed reaction is [ThiI sulfur-carrier protein]-S-sulfanyl-L-cysteine + a uridine in tRNA + 2 reduced [2Fe-2S]-[ferredoxin] + ATP + H(+) = [ThiI sulfur-carrier protein]-L-cysteine + a 4-thiouridine in tRNA + 2 oxidized [2Fe-2S]-[ferredoxin] + AMP + diphosphate. The enzyme catalyses [ThiS sulfur-carrier protein]-C-terminal Gly-Gly-AMP + S-sulfanyl-L-cysteinyl-[cysteine desulfurase] + AH2 = [ThiS sulfur-carrier protein]-C-terminal-Gly-aminoethanethioate + L-cysteinyl-[cysteine desulfurase] + A + AMP + 2 H(+). Its pathway is cofactor biosynthesis; thiamine diphosphate biosynthesis. In terms of biological role, catalyzes the ATP-dependent transfer of a sulfur to tRNA to produce 4-thiouridine in position 8 of tRNAs, which functions as a near-UV photosensor. Also catalyzes the transfer of sulfur to the sulfur carrier protein ThiS, forming ThiS-thiocarboxylate. This is a step in the synthesis of thiazole, in the thiamine biosynthesis pathway. The sulfur is donated as persulfide by IscS. This chain is Probable tRNA sulfurtransferase, found in Streptococcus pneumoniae (strain ATCC 700669 / Spain 23F-1).